Here is a 456-residue protein sequence, read N- to C-terminus: Shufflon protein D' (456 aa).

A constant region region spans residues 1–361 (MKKYDRGWAS…TGAILSCQSG (361 aa)). Residues 362–456 (TWRKSNSGST…KCSYVVACQN (95 aa)) form a variable region region.

This is Shufflon protein D' from Escherichia coli.